The following is a 367-amino-acid chain: Di-N-acetylchitobiase (367 aa).

The first 23 residues, 1–23, serve as a signal peptide directing secretion; that stretch reads MALSDLLELTLLLLLPLLERLSA. The GH18 domain occupies 24–367; that stretch reads EDCPCSEASL…EMWGALRPRL (344 aa). Glutamate 128 functions as the Proton donor in the catalytic mechanism. N-linked (GlcNAc...) asparagine glycosylation is found at asparagine 178, asparagine 213, asparagine 247, and asparagine 284.

The protein belongs to the glycosyl hydrolase 18 family.

It is found in the lysosome. Involved in the degradation of asparagine-linked glycoproteins. Hydrolyze of N-acetyl-beta-D-glucosamine (1-4)N-acetylglucosamine chitobiose core from the reducing end of the bond, it requires prior cleavage by glycosylasparaginase. This is Di-N-acetylchitobiase (Ctbs) from Rattus norvegicus (Rat).